We begin with the raw amino-acid sequence, 553 residues long: RNA N(6)-adenosine-methyltransferase METTL16 (553 aa).

The segment at 17–20 (PPDF) is RNA-binding. Positions 82, 110, 114, 133, 164, and 184 each coordinate S-adenosyl-L-methionine. The segment at 163 to 167 (KTLLM) is K-loop. RNA-binding stretches follow at residues 199 to 211 (SRNSRRPPPSSVN), 250 to 254 (GKKCS), and 277 to 283 (QGRTMRW). The tract at residues 289–400 (FYDDVTVPSP…QLREVPRAPE (112 aa)) is VCR 1. Serine 329, serine 425, and serine 429 each carry phosphoserine. The interval 457 to 496 (EETPEATEDERDEERGGMEAMESCKGSSNGAQDGEASEKG) is disordered. Positions 458-468 (ETPEATEDERD) are enriched in acidic residues. Threonine 463 carries the post-translational modification Phosphothreonine. Residues 506–553 (YLFKCLVNIKKEAGDAVVEMHWVEGQNRDLMNQLCTYVRNQILRLVAS) form a VCR 2 region.

Belongs to the methyltransferase superfamily. METTL16/RlmF family. In terms of assembly, interacts with MEPCE. Interacts with LARP7.

It is found in the nucleus. It localises to the cytoplasm. The catalysed reaction is adenosine in U6 snRNA + S-adenosyl-L-methionine = N(6)-methyladenosine in U6 snRNA + S-adenosyl-L-homocysteine + H(+). It catalyses the reaction an adenosine in mRNA + S-adenosyl-L-methionine = an N(6)-methyladenosine in mRNA + S-adenosyl-L-homocysteine + H(+). Methyltransferase activity is autoinhibited by the K-loop region that blocks S-adenosyl-L-methionine-binding. Upon activation, K-loop changes conformation, allowing S-adenosyl-L-methionine-binding and subsequent methyltransferase activity. mRNA N6-adenosine-methyltransferase activity is inhibited by zinc. RNA N6-methyltransferase that methylates adenosine residues at the N(6) position of a subset of RNAs and is involved in S-adenosyl-L-methionine homeostasis by regulating expression of MAT2A transcripts. Able to N6-methylate a subset of mRNAs and U6 small nuclear RNAs (U6 snRNAs). In contrast to the METTL3-METTL14 heterodimer, only able to methylate a limited number of RNAs: requires both a 5'UACAGAGAA-3' nonamer sequence and a specific RNA structure. Plays a key role in S-adenosyl-L-methionine homeostasis by mediating N6-methylation of MAT2A mRNAs, altering splicing of MAT2A transcripts: in presence of S-adenosyl-L-methionine, binds the 3'-UTR region of MAT2A mRNA and specifically N6-methylates the first hairpin of MAT2A mRNA, preventing recognition of their 3'-splice site by U2AF1/U2AF35, thereby inhibiting splicing and protein production of S-adenosylmethionine synthase. In S-adenosyl-L-methionine-limiting conditions, binds the 3'-UTR region of MAT2A mRNA but stalls due to the lack of a methyl donor, preventing N6-methylation and promoting expression of MAT2A. In addition to mRNAs, also able to mediate N6-methylation of U6 small nuclear RNA (U6 snRNA): specifically N6-methylates adenine in position 43 of U6 snRNAs. Also able to bind various lncRNAs, such as 7SK snRNA (7SK RNA) or 7SL RNA. Specifically binds the 3'-end of the MALAT1 long non-coding RNA. This Mus musculus (Mouse) protein is RNA N(6)-adenosine-methyltransferase METTL16.